A 20-amino-acid chain; its full sequence is Cytochrome P450-RR1 (20 aa).

This sequence belongs to the cytochrome P450 family. Heme serves as cofactor.

Its function is as follows. P450-RRI catalyzes the O-dealkylation of 2-ethoxyphenol and 2-methoxyphenol to produce catechol. The cytochrome binds other ortho-substituted phenols, including 2-ethoxyphenol, 2-methylphenol and 2-chlorophenol. The sequence is that of Cytochrome P450-RR1 from Rhodococcus rhodochrous.